Reading from the N-terminus, the 210-residue chain is Redox-sensing transcriptional repressor Rex (210 aa).

Positions 17-56 form a DNA-binding region, H-T-H motif; the sequence is KYYRYLAELMDNDVDRISSKELSEKIGFTASQIRQDLNNF. 91-96 lines the NAD(+) pocket; it reads GAGNIG.

Belongs to the transcriptional regulatory Rex family. In terms of assembly, homodimer.

It is found in the cytoplasm. Modulates transcription in response to changes in cellular NADH/NAD(+) redox state. The polypeptide is Redox-sensing transcriptional repressor Rex (Clostridium novyi (strain NT)).